A 289-amino-acid chain; its full sequence is MYB transcription factor 69 (289 aa).

HTH myb-type domains are found at residues 9–61 (KAGV…TNYL) and 62–116 (RPGI…KKKL). 2 consecutive DNA-binding regions (H-T-H motif) follow at residues 37–61 (WRAV…TNYL) and 89–112 (WAAI…NTHL). 2 disordered regions span residues 127 to 162 (APPR…ADST) and 225 to 252 (SSAI…QQQQ). The span at 139 to 154 (ADCRRHDMTRSSKDSH) shows a compositional bias: basic and acidic residues.

As to expression, mainly expressed in highly lignified tissues such as vascular tissues.

Its subcellular location is the nucleus. Transcription factor that binds to the promoter of MYB31 and MYB42 and activates directly their expression, thus repressing lignin biosynthesis. The polypeptide is MYB transcription factor 69 (Zea mays (Maize)).